Reading from the N-terminus, the 64-residue chain is U-myrmeciitoxin(01)-Mg4b (64 aa).

A signal peptide spans 1–25; that stretch reads MGKIFFFVLMIAIIGSTFLIEEALG.

Belongs to the ant myrmeciitoxin-01 family. As to quaternary structure, homodimer; disulfide-linked. In terms of processing, contains 2 intrachain disulfide bonds (per chain) and 1 interchain disulfide bond. Expressed by the venom gland.

The protein resides in the secreted. May have antimicrobial properties, like most ant linear peptides. The polypeptide is U-myrmeciitoxin(01)-Mg4b (Myrmecia gulosa (Red bulldog ant)).